Reading from the N-terminus, the 417-residue chain is MLEQMGIAAKQASYKLAQLSSREKNRVLEKIADELEAQSEIILNANAQDVADARANGLSEAMLDRLALTPARLKGIADDVRQVCNLADPVGQVIDGGVLDSGLRLERRRVPLGVIGVIYEARPNVTVDVASLCLKTGNAVILRGGKETCRTNAATVAVIQDALKSCGLPAGAVQAIDNPDRALVSEMLRMDKYIDMLIPRGGAGLHKLCREQSTIPVITGGIGVCHIYVDESVEIAEALKVIVNAKTQRPSTCNTVETLLVNKNIADSFLPALSKQMAESGVTLHADAAALAQLQAGPAKVVAVKAEEYDDEFLSLDLNVKIVSDLDDAIAHIREHGTQHSDAILTCDMRNAQRFVNEVDSSAVYVNASTRFTDGGQFGLGAEVAVSTQKLHARGPMGLEALTTYKWIGIGDYTIRA.

This sequence belongs to the gamma-glutamyl phosphate reductase family.

The protein localises to the cytoplasm. The enzyme catalyses L-glutamate 5-semialdehyde + phosphate + NADP(+) = L-glutamyl 5-phosphate + NADPH + H(+). It participates in amino-acid biosynthesis; L-proline biosynthesis; L-glutamate 5-semialdehyde from L-glutamate: step 2/2. Its function is as follows. Catalyzes the NADPH-dependent reduction of L-glutamate 5-phosphate into L-glutamate 5-semialdehyde and phosphate. The product spontaneously undergoes cyclization to form 1-pyrroline-5-carboxylate. This chain is Gamma-glutamyl phosphate reductase, found in Shigella boydii serotype 18 (strain CDC 3083-94 / BS512).